The sequence spans 317 residues: Protoheme IX farnesyltransferase (317 aa).

6 helical membrane passes run 25-45, 54-74, 117-137, 167-189, 244-264, and 281-301; these read FFAL…LVGM, PVIG…SGCL, LMLG…TIVF, IGQA…IIFI, LGFG…AMLV, and AAMS…SALL.

The protein belongs to the UbiA prenyltransferase family. Protoheme IX farnesyltransferase subfamily.

It localises to the cell inner membrane. It carries out the reaction heme b + (2E,6E)-farnesyl diphosphate + H2O = Fe(II)-heme o + diphosphate. It functions in the pathway porphyrin-containing compound metabolism; heme O biosynthesis; heme O from protoheme: step 1/1. Its function is as follows. Converts heme B (protoheme IX) to heme O by substitution of the vinyl group on carbon 2 of heme B porphyrin ring with a hydroxyethyl farnesyl side group. The sequence is that of Protoheme IX farnesyltransferase from Methylobacterium nodulans (strain LMG 21967 / CNCM I-2342 / ORS 2060).